Here is a 293-residue protein sequence, read N- to C-terminus: MAQLQVTLEVAAGDLDAVDGALELAGALSQTYQADDGTVLLEPGVGEHPLWEQVRVDALFPPETDPDALHTLLAGQLGERLRGWQAETLEDRAWEREWLDHFRPMAFGERLWIVPTGAEPELPAGAVPIHLDPGLAFGTGTHETTALCLEWLDGEPIAGRNGLDYGAGSGILAVAAVRLGAACCMAVDNDPQAVVASRENAERNGVAEDVPSYAVDQRPAYCADFLVANILASTLVDLADELRDGVRVGGRLALSGILRGQEQQVMDAFQGGIAWDAPRCCGDWVLVSGTRTA.

4 residues coordinate S-adenosyl-L-methionine: Thr145, Gly166, Asp188, and Asn229.

This sequence belongs to the methyltransferase superfamily. PrmA family.

The protein resides in the cytoplasm. The catalysed reaction is L-lysyl-[protein] + 3 S-adenosyl-L-methionine = N(6),N(6),N(6)-trimethyl-L-lysyl-[protein] + 3 S-adenosyl-L-homocysteine + 3 H(+). Methylates ribosomal protein L11. The protein is Ribosomal protein L11 methyltransferase of Halorhodospira halophila (strain DSM 244 / SL1) (Ectothiorhodospira halophila (strain DSM 244 / SL1)).